Here is a 102-residue protein sequence, read N- to C-terminus: uncharacterized protein (102 aa).

Helical transmembrane passes span 28–48 (YLNL…LISI) and 81–101 (LSVL…AGIG).

Its subcellular location is the membrane. This is an uncharacterized protein from Saccharomyces cerevisiae (strain ATCC 204508 / S288c) (Baker's yeast).